The primary structure comprises 522 residues: Na(+)/H(+) antiporter NhaB (522 aa).

9 helical membrane passes run Phe13 to Pro33, Leu98 to Phe118, Ala140 to Val160, Phe239 to Leu259, Ala304 to Leu324, Leu356 to Ile376, Leu390 to Val410, Ala446 to Ile466, and Ala477 to Val497.

This sequence belongs to the NhaB Na(+)/H(+) (TC 2.A.34) antiporter family.

The protein localises to the cell inner membrane. It catalyses the reaction 2 Na(+)(in) + 3 H(+)(out) = 2 Na(+)(out) + 3 H(+)(in). Na(+)/H(+) antiporter that extrudes sodium in exchange for external protons. The polypeptide is Na(+)/H(+) antiporter NhaB (Yersinia pestis bv. Antiqua (strain Angola)).